Reading from the N-terminus, the 167-residue chain is CASP-like protein 3 (167 aa).

Topologically, residues 1-2 (MK) are cytoplasmic. The helical transmembrane segment at 3–23 (IIAIAPRIGAAVLSLVAFSVM) threads the bilayer. Residues 24–48 (ASTGERRSGAGSTFKVKFSDFQAYN) are Extracellular-facing. Residues 49–69 (YLIALNVILFVYSTVQLVMLV) traverse the membrane as a helical segment. Over 70–80 (NSNHNSSFSSP) the chain is Cytoplasmic. Residues 81–101 (FKWVLGVYICDQLLAFLLFSA) traverse the membrane as a helical segment. The Extracellular segment spans residues 102–137 (SSSAATASELSRHGLHNIWPPACATWKLWTFCSKAE). A helical transmembrane segment spans residues 138–158 (AAVAMSFLSSFFIITSSILSG). The Cytoplasmic portion of the chain corresponds to 159-167 (YHLSKVPAV).

Belongs to the Casparian strip membrane proteins (CASP) family. In terms of assembly, homodimer and heterodimers.

Its subcellular location is the cell membrane. This is CASP-like protein 3 from Osmunda lancea (Fern).